Consider the following 377-residue polypeptide: Glutamate 5-kinase (377 aa).

Lys-20 is an ATP binding site. Substrate-binding residues include Ser-60, Asp-147, and Asn-159. 179–180 contributes to the ATP binding site; the sequence is TD. A PUA domain is found at 285–363; it reads AGRLVIDAGA…DKVHQVLGEA (79 aa).

This sequence belongs to the glutamate 5-kinase family.

Its subcellular location is the cytoplasm. The catalysed reaction is L-glutamate + ATP = L-glutamyl 5-phosphate + ADP. Its pathway is amino-acid biosynthesis; L-proline biosynthesis; L-glutamate 5-semialdehyde from L-glutamate: step 1/2. In terms of biological role, catalyzes the transfer of a phosphate group to glutamate to form L-glutamate 5-phosphate. The chain is Glutamate 5-kinase from Acinetobacter baylyi (strain ATCC 33305 / BD413 / ADP1).